A 354-amino-acid chain; its full sequence is Arginase (354 aa).

4 residues coordinate Mn(2+): His136, Asp159, His161, and Asp163. Residues Asn165, Ser172, and Asp217 each contribute to the L-arginine site. 2 residues coordinate Mn(2+): Asp266 and Asp268.

It belongs to the arginase family. Homotrimer; oligomerization is dependent on Mn(2+) binding. Mn(2+) serves as cofactor.

The catalysed reaction is L-arginine + H2O = urea + L-ornithine. It functions in the pathway nitrogen metabolism; urea cycle; L-ornithine and urea from L-arginine: step 1/1. Functionally, catalyzes the hydrolysis of L-arginine into urea and L-ornithine, which is a precursor for polyamine biosynthesis. May play a role in parasite intra-hepatic development during the host liver stage. This is Arginase from Plasmodium berghei (strain Anka).